Here is a 346-residue protein sequence, read N- to C-terminus: Flap endonuclease 1 (346 aa).

The tract at residues 1-102 (MGVTELGKLI…LEIEQRKKAK (102 aa)) is N-domain. Aspartate 31, aspartate 84, glutamate 156, glutamate 158, aspartate 177, aspartate 179, and aspartate 239 together coordinate Mg(2+). The interval 120–261 (DVAKYAKRAI…KALKLIWEFG (142 aa)) is I-domain.

The protein belongs to the XPG/RAD2 endonuclease family. FEN1 subfamily. Interacts with PCNA. PCNA stimulates the nuclease activity without altering cleavage specificity. Mg(2+) serves as cofactor.

In terms of biological role, structure-specific nuclease with 5'-flap endonuclease and 5'-3' exonuclease activities involved in DNA replication and repair. During DNA replication, cleaves the 5'-overhanging flap structure that is generated by displacement synthesis when DNA polymerase encounters the 5'-end of a downstream Okazaki fragment. Binds the unpaired 3'-DNA end and kinks the DNA to facilitate 5' cleavage specificity. Cleaves one nucleotide into the double-stranded DNA from the junction in flap DNA, leaving a nick for ligation. Also involved in the base excision repair (BER) pathway. Acts as a genome stabilization factor that prevents flaps from equilibrating into structures that lead to duplications and deletions. Also possesses 5'-3' exonuclease activity on nicked or gapped double-stranded DNA. The chain is Flap endonuclease 1 from Pyrobaculum calidifontis (strain DSM 21063 / JCM 11548 / VA1).